Reading from the N-terminus, the 428-residue chain is Gamma-glutamyl phosphate reductase (428 aa).

The protein belongs to the gamma-glutamyl phosphate reductase family.

It is found in the cytoplasm. The enzyme catalyses L-glutamate 5-semialdehyde + phosphate + NADP(+) = L-glutamyl 5-phosphate + NADPH + H(+). Its pathway is amino-acid biosynthesis; L-proline biosynthesis; L-glutamate 5-semialdehyde from L-glutamate: step 2/2. Its function is as follows. Catalyzes the NADPH-dependent reduction of L-glutamate 5-phosphate into L-glutamate 5-semialdehyde and phosphate. The product spontaneously undergoes cyclization to form 1-pyrroline-5-carboxylate. This chain is Gamma-glutamyl phosphate reductase, found in Clostridium tetani (strain Massachusetts / E88).